Consider the following 84-residue polypeptide: Small ribosomal subunit protein uS17 (84 aa).

The protein belongs to the universal ribosomal protein uS17 family. In terms of assembly, part of the 30S ribosomal subunit.

One of the primary rRNA binding proteins, it binds specifically to the 5'-end of 16S ribosomal RNA. In Proteus mirabilis (strain HI4320), this protein is Small ribosomal subunit protein uS17.